A 279-amino-acid chain; its full sequence is MGIRKYKPTTPGRRGSSVADFTEITRSTPEKSLVRPLPKKGGRNNTGKITTRHKGGGHKRQYRLIDFRRHDKDGVDARVAEIEYDPNRTARIALLHYVDGTKRYIIAPNKLSQGDFVEAGPNADIKPGNNLPLRNIPVGTVVHAVELRPGGGAKMGRSAGASIQLVAREGRFAQLRLPSGEIRNVDVRCRATVGEVGNAEQSNINWGKAGRMRWKGVRPTVRGVAMNPVDHPHGGGEGKTSGGRNPVNPNGQREGRTRRPNKESDKLIVRRRRTGKNKR.

2 disordered regions span residues 1–59 and 224–279; these read MGIR…GGHK and VAMN…KNKR. Basic residues predominate over residues 50-59; sequence TTRHKGGGHK. Residues 253-268 are compositionally biased toward basic and acidic residues; the sequence is REGRTRRPNKESDKLI. A compositionally biased stretch (basic residues) spans 269–279; sequence VRRRRTGKNKR.

It belongs to the universal ribosomal protein uL2 family. In terms of assembly, part of the 50S ribosomal subunit. Forms a bridge to the 30S subunit in the 70S ribosome.

One of the primary rRNA binding proteins. Required for association of the 30S and 50S subunits to form the 70S ribosome, for tRNA binding and peptide bond formation. It has been suggested to have peptidyltransferase activity; this is somewhat controversial. Makes several contacts with the 16S rRNA in the 70S ribosome. The protein is Large ribosomal subunit protein uL2 of Pseudarthrobacter chlorophenolicus (strain ATCC 700700 / DSM 12829 / CIP 107037 / JCM 12360 / KCTC 9906 / NCIMB 13794 / A6) (Arthrobacter chlorophenolicus).